The following is a 209-amino-acid chain: Ribosomal RNA large subunit methyltransferase E (209 aa).

Residues Gly60, Trp62, Asp80, Asp96, and Asp121 each coordinate S-adenosyl-L-methionine. The Proton acceptor role is filled by Lys161.

This sequence belongs to the class I-like SAM-binding methyltransferase superfamily. RNA methyltransferase RlmE family.

The protein localises to the cytoplasm. It catalyses the reaction uridine(2552) in 23S rRNA + S-adenosyl-L-methionine = 2'-O-methyluridine(2552) in 23S rRNA + S-adenosyl-L-homocysteine + H(+). Its function is as follows. Specifically methylates the uridine in position 2552 of 23S rRNA at the 2'-O position of the ribose in the fully assembled 50S ribosomal subunit. In Pseudomonas fluorescens (strain Pf0-1), this protein is Ribosomal RNA large subunit methyltransferase E.